The following is a 190-amino-acid chain: Putative phosphatidylethanolamine-binding protein (190 aa).

The protein belongs to the phosphatidylethanolamine-binding protein family.

The protein is Putative phosphatidylethanolamine-binding protein of Plasmodium falciparum.